A 231-amino-acid polypeptide reads, in one-letter code: Fibrillarin-like rRNA/tRNA 2'-O-methyltransferase (231 aa).

S-adenosyl-L-methionine contacts are provided by residues 88 to 89 (TT), 106 to 107 (EF), 131 to 132 (DA), and 151 to 154 (DVAQ).

This sequence belongs to the methyltransferase superfamily. Fibrillarin family. Interacts with nop5. Component of box C/D small ribonucleoprotein (sRNP) particles that contain rpl7ae, FlpA and nop5, plus a guide RNA.

Involved in pre-rRNA and tRNA processing. Utilizes the methyl donor S-adenosyl-L-methionine to catalyze the site-specific 2'-hydroxyl methylation of ribose moieties in rRNA and tRNA. Site specificity is provided by a guide RNA that base pairs with the substrate. Methylation occurs at a characteristic distance from the sequence involved in base pairing with the guide RNA. The chain is Fibrillarin-like rRNA/tRNA 2'-O-methyltransferase from Methanococcus aeolicus (strain ATCC BAA-1280 / DSM 17508 / OCM 812 / Nankai-3).